The chain runs to 223 residues: Transmembrane protein 235 (223 aa).

An N-terminal signal peptide occupies residues 1-28; that stretch reads MARLGALLLAAALGALLSFALLAAAVAS. An N-linked (GlcNAc...) asparagine glycan is attached at asparagine 41. The next 3 membrane-spanning stretches (helical) occupy residues 96–116, 126–146, and 176–196; these read VIVVLPLSLVLLVCGWICGLL, LLFTGCYFLLGSVLTLAGVSI, and WSMALAWGSCALEAFSGTLLL.

Belongs to the PMP-22/EMP/MP20 family. In terms of processing, N-glycosylated.

Its subcellular location is the membrane. The protein resides in the endoplasmic reticulum. In Homo sapiens (Human), this protein is Transmembrane protein 235 (TMEM235).